Here is a 238-residue protein sequence, read N- to C-terminus: Probable RNA/DNA demethylase ALKBH6 (238 aa).

The Fe2OG dioxygenase domain occupies 96-227 (PANHVLVNQY…RVSLTIRRVP (132 aa)). Residues Asn103 and Tyr105 each contribute to the 2-oxoglutarate site. Residues His114 and Asp116 each coordinate Fe cation. The tract at residues 138 to 161 (YEPRRPEDDDPTEQPRPPPRPTTS) is disordered. Position 182 (His182) interacts with Fe cation. 2 residues coordinate 2-oxoglutarate: Arg218 and Ser220.

It belongs to the alkB family. As to quaternary structure, interacts with VCPKMT. The cofactor is Fe(2+). Widely expressed, with highest expression in testis and pancreas.

The protein resides in the cytoplasm. The protein localises to the nucleus. In terms of biological role, probable Fe(2+)/2-oxoglutarate-dependent dioxygenase involved in oxidative demethylation of nucleic acids. Binds nucleic acids with a preference for ssDNA or ssRNA to other types of DNAs. May play a role in nucleic acid damage repair. The protein is Probable RNA/DNA demethylase ALKBH6 of Homo sapiens (Human).